Reading from the N-terminus, the 301-residue chain is D-alanine--D-alanine ligase (301 aa).

Positions 99–294 (KCILKAANIR…FSELIDMIID (196 aa)) constitute an ATP-grasp domain. Position 126–181 (126–181 (IEGMGYPVVVKPTHGGSSVATFIIKEEKDIKNAVTEAFKWDSEVIIEKFIKGDEIT)) interacts with ATP. Positions 248, 261, and 263 each coordinate Mg(2+).

It belongs to the D-alanine--D-alanine ligase family. It depends on Mg(2+) as a cofactor. Mn(2+) is required as a cofactor.

It localises to the cytoplasm. The enzyme catalyses 2 D-alanine + ATP = D-alanyl-D-alanine + ADP + phosphate + H(+). Its pathway is cell wall biogenesis; peptidoglycan biosynthesis. In terms of biological role, cell wall formation. The chain is D-alanine--D-alanine ligase from Clostridium botulinum (strain Eklund 17B / Type B).